The chain runs to 397 residues: Putative efflux system protein YvrP (397 aa).

The chain crosses the membrane as a helical span at residues 8–28 (LIGGAICAGVLVLAGIGAGGF). Residues 106-183 (EDHSDEVEQA…KELAGLTKNK (78 aa)) adopt a coiled-coil conformation.

It belongs to the membrane fusion protein (MFP) (TC 8.A.1) family.

The protein resides in the cell membrane. This Bacillus subtilis (strain 168) protein is Putative efflux system protein YvrP (yvrP).